The primary structure comprises 351 residues: SH3 domain-containing protein 3 (351 aa).

Coiled-coil stretches lie at residues 1–21 (MDAFRRQASKLRDQVAKQQLA) and 193–213 (LQLAEAKMQELKANMAVLGKE). Residues 31-267 (YESSDVMVID…MVTEKQHKES (237 aa)) form the BAR domain. One can recognise an SH3 domain in the interval 281 to 340 (TSYFLAEVIHPFSAASEKELDLDKGDYIVVRKVSQTGWAEGECKGKAGWFPMAYIEKRQR).

In terms of assembly, interacts with FREE1. Interacts (via SH3 domain) with DRP2A/ADL6. Binds to SH3P2. In terms of tissue distribution, detected in all tissues except seedlings.

The protein localises to the cytoplasmic vesicle. It is found in the clathrin-coated vesicle. In terms of biological role, may be involved in the recruitment of DRP2A to the accessory protein complex and in the negative regulation of its GTPase activity. This Arabidopsis thaliana (Mouse-ear cress) protein is SH3 domain-containing protein 3.